The primary structure comprises 302 residues: Recombination-associated protein RdgC (302 aa).

The protein belongs to the RdgC family.

The protein resides in the cytoplasm. It localises to the nucleoid. Its function is as follows. May be involved in recombination. The protein is Recombination-associated protein RdgC of Proteus mirabilis (strain HI4320).